We begin with the raw amino-acid sequence, 50 residues long: Phospholipase A2 trimorphin (50 aa).

Residues tyrosine 28, glycine 30, and glycine 32 each coordinate Ca(2+). A disulfide bridge connects residues cysteine 29 and cysteine 45. Histidine 48 is an active-site residue. Residue aspartate 49 participates in Ca(2+) binding.

Ca(2+) is required as a cofactor. In terms of tissue distribution, expressed by the venom gland.

It is found in the secreted. It carries out the reaction a 1,2-diacyl-sn-glycero-3-phosphocholine + H2O = a 1-acyl-sn-glycero-3-phosphocholine + a fatty acid + H(+). With respect to regulation, inhibited by EDTA. PLA2 catalyzes the calcium-dependent hydrolysis of the 2-acyl groups in 3-sn-phosphoglycerides. The protein is Phospholipase A2 trimorphin of Trimorphodon lambda (Sonoran lyre snake).